A 468-amino-acid chain; its full sequence is Probable protein phosphatase 2C 52 (468 aa).

In terms of domain architecture, PPM-type phosphatase spans 67–372 (SSCIFTQQGR…DDCAVVCLFL (306 aa)). 4 residues coordinate Mn(2+): Asp-102, Gly-103, Asp-317, and Asp-363. The span at 413–429 (RSSSDQENETYGNVNTE) shows a compositional bias: polar residues. A disordered region spans residues 413-442 (RSSSDQENETYGNVNTETDAEDEKTVGDQN).

Belongs to the PP2C family. It depends on Mg(2+) as a cofactor. Requires Mn(2+) as cofactor.

The catalysed reaction is O-phospho-L-seryl-[protein] + H2O = L-seryl-[protein] + phosphate. The enzyme catalyses O-phospho-L-threonyl-[protein] + H2O = L-threonyl-[protein] + phosphate. The sequence is that of Probable protein phosphatase 2C 52 from Arabidopsis thaliana (Mouse-ear cress).